The chain runs to 535 residues: Phosphoenolpyruvate carboxykinase (ATP) (535 aa).

Residues Arg-59, Tyr-201, and Lys-207 each contribute to the substrate site. ATP is bound by residues Lys-207, His-226, and 243–251 (GLSGTGKTT). Lys-207 and His-226 together coordinate Mn(2+). Asp-264 serves as a coordination point for Mn(2+). ATP-binding positions include Glu-292, Arg-328, 444–445 (RI), and Thr-450. Arg-328 contacts substrate.

Belongs to the phosphoenolpyruvate carboxykinase (ATP) family. Mn(2+) serves as cofactor.

It localises to the cytoplasm. It catalyses the reaction oxaloacetate + ATP = phosphoenolpyruvate + ADP + CO2. The protein operates within carbohydrate biosynthesis; gluconeogenesis. Its function is as follows. Involved in the gluconeogenesis. Catalyzes the conversion of oxaloacetate (OAA) to phosphoenolpyruvate (PEP) through direct phosphoryl transfer between the nucleoside triphosphate and OAA. The polypeptide is Phosphoenolpyruvate carboxykinase (ATP) (Porphyromonas gingivalis (strain ATCC 33277 / DSM 20709 / CIP 103683 / JCM 12257 / NCTC 11834 / 2561)).